We begin with the raw amino-acid sequence, 555 residues long: Solute carrier family 2, facilitated glucose transporter member 10 (555 aa).

Over 1-15 (MGLSSPTLILAATVS) the chain is Cytoplasmic. The chain crosses the membrane as a helical span at residues 16–36 (LLGGIVFGYELGIISGALLVL). Topologically, residues 37–48 (KTVYQLTCFEQE) are extracellular. Residues 49 to 69 (ALVSAVLFGALLASLIGGIII) traverse the membrane as a helical segment. Residues 70-82 (DRWGRRTAILASN) are Cytoplasmic-facing. The chain crosses the membrane as a helical span at residues 83 to 103 (LVVLAGSIILIATSTFWWLIV). Residues 104-105 (GR) are Extracellular-facing. Residues 106 to 126 (VTIGFAISISSMACCIYVSEI) traverse the membrane as a helical segment. The Cytoplasmic portion of the chain corresponds to 127–132 (VRPHQR). Residues 133 to 153 (GMLVSLYETGITVGILISYAM) form a helical membrane-spanning segment. Topologically, residues 154 to 165 (NYFLSGVNESWK) are extracellular. N-linked (GlcNAc...) asparagine glycosylation occurs at N161. A helical transmembrane segment spans residues 166–186 (YMFGLAIVPAAFQFISILFLP). Topologically, residues 187-240 (SKPHKLNFWEQDTDDGFIELEETGEAGEFKPDTYDRQYTFLDLFRSKDNMRTRT) are cytoplasmic. A helical membrane pass occupies residues 241–261 (LLGLGLVLFQQFTGQPNVLYY). 250–251 (QQ) lines the D-glucose pocket. The Extracellular segment spans residues 262-277 (ASTIFQSVGFQSNSSA). An N-linked (GlcNAc...) asparagine glycan is attached at N274. The chain crosses the membrane as a helical span at residues 278 to 298 (VLASVGLGVVKVASTLIAICF). Over 299–305 (ADKAGRR) the chain is Cytoplasmic. The helical transmembrane segment at 306 to 326 (ILLLAGCIVMTIAITGIGIVS) threads the bilayer. Over 327-415 (FTVKMDSHRD…ASPELPSNYT (89 aa)) the chain is Extracellular. N-linked (GlcNAc...) asparagine glycosylation is found at N344, N351, N400, and N413. A helical transmembrane segment spans residues 416 to 436 (ILNWITLLSMMAFVSAFSIGF). Residues 437–464 (GPMTWIVLSEIYPADIRGRAFAFCNSFN) are Cytoplasmic-facing. W441 contributes to the D-glucose binding site. The chain crosses the membrane as a helical span at residues 465 to 483 (WAANLLITLTFLDVIASIG). Over 484 to 485 (LS) the chain is Extracellular. The helical transmembrane segment at 486 to 506 (WTFLLYGVVGLLAIAFIYFFI) threads the bilayer. Residues 507-555 (PETKGQSLEEIDKQFSTKRILQKRETSKGVGKRPSSGPPYQRIGKASPS) are Cytoplasmic-facing. A disordered region spans residues 528 to 555 (QKRETSKGVGKRPSSGPPYQRIGKASPS).

Belongs to the major facilitator superfamily. Sugar transporter (TC 2.A.1.1) family. Glucose transporter subfamily.

It localises to the endomembrane system. Its subcellular location is the cytoplasm. The protein localises to the perinuclear region. The enzyme catalyses D-glucose(out) = D-glucose(in). Facilitative glucose transporter required for the development of the cardiovascular system. In Xenopus tropicalis (Western clawed frog), this protein is Solute carrier family 2, facilitated glucose transporter member 10.